The sequence spans 137 residues: Type 3 secretion system pilotin (137 aa).

The first 14 residues, 1–14 (MLLPLALLLGGCVS), serve as a signal peptide directing secretion.

It belongs to the ExsB/YscW family.

It localises to the cell outer membrane. Its function is as follows. Involved in the synthesis of the type III secretion system (T3SS), also called injectisome, which is used to inject bacterial effector proteins into eukaryotic host cells. Pilot protein that is required for the proper localization of the secretin PscC in the outer membrane. Necessary for full in vivo virulence. This chain is Type 3 secretion system pilotin, found in Pseudomonas aeruginosa (strain ATCC 15692 / DSM 22644 / CIP 104116 / JCM 14847 / LMG 12228 / 1C / PRS 101 / PAO1).